Reading from the N-terminus, the 376-residue chain is MKIRVERDVLAEAVAWAARSLPARPPAPVLAGLLLKAEEGQLSLSSFDYEVSARVSVEAEIEEEGTVLVSGRLLADISRALPNRPVEISTDGVRATVVCGSSRFTLHTLPVEEYPALPQMPEATGTVPGEVFASAVQQVAIAAGRDDTLPVLTGVRIEIEGDSVTLASTDRYRFAVREFLWKPENPDISAVALVPAKTLQDTAKALTSGDQVILALSGSGAGEGLIGFEGAGRRTTTRLLEGDLPKYKTLFPTEFNSVAVIETAPFVEAVKRVALVAERNTPVRLSFEQGVLILEAGSSDDAQAVERVDAQLEGDDISIAFNPTFLLDGLSAIDSPVAQLSFTTSTKPALLSGRPAVDAEADEAYKYLIMPVRLSG.

The protein belongs to the beta sliding clamp family. Forms a ring-shaped head-to-tail homodimer around DNA which binds and tethers DNA polymerases and other proteins to the DNA. The DNA replisome complex has a single clamp-loading complex (3 tau and 1 each of delta, delta', psi and chi subunits) which binds 3 Pol III cores (1 core on the leading strand and 2 on the lagging strand) each with a beta sliding clamp dimer. Additional proteins in the replisome are other copies of gamma, psi and chi, Ssb, DNA helicase and RNA primase.

The protein localises to the cytoplasm. Confers DNA tethering and processivity to DNA polymerases and other proteins. Acts as a clamp, forming a ring around DNA (a reaction catalyzed by the clamp-loading complex) which diffuses in an ATP-independent manner freely and bidirectionally along dsDNA. Initially characterized for its ability to contact the catalytic subunit of DNA polymerase III (Pol III), a complex, multichain enzyme responsible for most of the replicative synthesis in bacteria; Pol III exhibits 3'-5' exonuclease proofreading activity. The beta chain is required for initiation of replication as well as for processivity of DNA replication. This chain is Beta sliding clamp (dnaN), found in Streptomyces coelicolor (strain ATCC BAA-471 / A3(2) / M145).